A 786-amino-acid chain; its full sequence is Endonuclease MutS2 (786 aa).

335 to 342 (GPNTGGKT) provides a ligand contact to ATP. The Smr domain occupies 711-786 (LDLRGERFEN…GLGVTVVELK (76 aa)).

This sequence belongs to the DNA mismatch repair MutS family. MutS2 subfamily. As to quaternary structure, homodimer. Binds to stalled ribosomes, contacting rRNA.

Functionally, endonuclease that is involved in the suppression of homologous recombination and thus may have a key role in the control of bacterial genetic diversity. Its function is as follows. Acts as a ribosome collision sensor, splitting the ribosome into its 2 subunits. Detects stalled/collided 70S ribosomes which it binds and splits by an ATP-hydrolysis driven conformational change. Acts upstream of the ribosome quality control system (RQC), a ribosome-associated complex that mediates the extraction of incompletely synthesized nascent chains from stalled ribosomes and their subsequent degradation. Probably generates substrates for RQC. The sequence is that of Endonuclease MutS2 from Bacillus cereus (strain B4264).